A 197-amino-acid chain; its full sequence is dITP/XTP pyrophosphatase (197 aa).

8–13 is a substrate binding site; it reads TGNAGK. Positions 40 and 69 each coordinate Mg(2+). Asp-69 (proton acceptor) is an active-site residue. Substrate-binding positions include Ser-70, 154 to 157, Lys-177, and 182 to 183; these read FGYD and HR.

Belongs to the HAM1 NTPase family. Homodimer. Mg(2+) is required as a cofactor.

It carries out the reaction XTP + H2O = XMP + diphosphate + H(+). The enzyme catalyses dITP + H2O = dIMP + diphosphate + H(+). It catalyses the reaction ITP + H2O = IMP + diphosphate + H(+). Its function is as follows. Pyrophosphatase that catalyzes the hydrolysis of nucleoside triphosphates to their monophosphate derivatives, with a high preference for the non-canonical purine nucleotides XTP (xanthosine triphosphate), dITP (deoxyinosine triphosphate) and ITP. Seems to function as a house-cleaning enzyme that removes non-canonical purine nucleotides from the nucleotide pool, thus preventing their incorporation into DNA/RNA and avoiding chromosomal lesions. The protein is dITP/XTP pyrophosphatase (rdgB) of Salmonella paratyphi A (strain ATCC 9150 / SARB42).